The sequence spans 412 residues: NF-kappa-B essential modulator (412 aa).

Residues 1 to 48 (MSRHLWKNQLSEMVQPSGGPAEDQDMLGEESSLGKPAMLHLPSEQGTP) are disordered. Residues 1–197 (MSRHLWKNQL…REVLQQQHSV (197 aa)) form a required for interaction with and ubiquitination by MARCHF2 region. A phosphoserine; by IKKB mark is found at S31 and S43. An interaction with CHUK/IKBKB region spans residues 44-111 (EQGTPETLQR…KLVERLSLEK (68 aa)). Positions 49–343 (ETLQRCLEEN…NKLKVGCHES (295 aa)) form a coiled coil. S68 is subject to Phosphoserine. S85 carries the phosphoserine; by ATM modification. Glycyl lysine isopeptide (Lys-Gly) (interchain with G-Cter in ubiquitin) cross-links involve residues K111, K139, K143, K226, and K246. Residues 150–250 (LGELQESQSR…YDSHIKSSKG (101 aa)) are interaction with TANK. A ubiquitin-binding (UBAN) region spans residues 242–343 (DSHIKSSKGM…NKLKVGCHES (102 aa)). A self-association region spans residues 246-358 (KSSKGMQLED…MRKRHVETSQ (113 aa)). Residues 249–412 (KGMQLEDLRQ…LQIHVMECIE (164 aa)) are required for interaction with TNFAIP3. A Glycyl lysine isopeptide (Lys-Gly) (interchain with G-Cter in SUMO); alternate cross-link involves residue K270. A Glycyl lysine isopeptide (Lys-Gly) (interchain with G-Cter in ubiquitin); alternate cross-link involves residue K270. Residues K276, K278, K285, and K295 each participate in a glycyl lysine isopeptide (Lys-Gly) (interchain with G-Cter in ubiquitin) cross-link. A Glycyl lysine isopeptide (Lys-Gly) (interchain with G-Cter in SUMO); alternate cross-link involves residue K302. K302 participates in a covalent cross-link: Glycyl lysine isopeptide (Lys-Gly) (interchain with G-Cter in ubiquitin); alternate. Glycyl lysine isopeptide (Lys-Gly) (interchain with G-Cter in ubiquitin) cross-links involve residues K314 and K319. Residues 315 to 336 (LVERKELLQEQLEQLQREFNKL) are leucine-zipper. S369 is subject to Phosphoserine; by IKKB. The tract at residues 375-412 (SNQRRSPPEEPPDFCCPKCQYQAPDMDTLQIHVMECIE) is interaction with CYLD. Phosphoserine is present on S380. A CCHC NOA-type zinc finger spans residues 382 to 412 (PEEPPDFCCPKCQYQAPDMDTLQIHVMECIE). C390 contributes to the Zn(2+) binding site. K392 is covalently cross-linked (Glycyl lysine isopeptide (Lys-Gly) (interchain with G-Cter in ubiquitin)). Zn(2+)-binding residues include C393, H406, and C410.

Homodimer; disulfide-linked. Component of the I-kappa-B-kinase (IKK) core complex consisting of CHUK, IKBKB and IKBKG; probably four alpha/CHUK-beta/IKBKB dimers are associated with four gamma/IKBKG subunits. The IKK core complex seems to associate with regulatory or adapter proteins to form a IKK-signalosome holo-complex. The IKK complex associates with TERF2IP/RAP1, leading to promote IKK-mediated phosphorylation of RELA/p65. Part of a complex composed of NCOA2, NCOA3, CHUK/IKKA, IKBKB, IKBKG and CREBBP. Interacts with COPS3, CYLD, NALP2, TRPC4AP and PIDD1. Interacts with ATM; the complex is exported from the nucleus. Interacts with TRAF6. Interacts with IKBKE. Interacts with TANK; the interaction is enhanced by IKBKE and TBK1. Part of a ternary complex consisting of TANK, IKBKB and IKBKG. Interacts with ZFAND5. Interacts with RIPK2. Interacts with TNIP1 and TNFAIP3; TNIP1 facilitates the TNFAIP3-mediated de-ubiquitination of IKBKG. Interacts with TNFAIP3; the interaction is induced by TNF stimulation and by polyubiquitin. Binds (via UBAN region) polyubiquitin; binds both 'Lys-63'-linked and linear polyubiquitin, with higher affinity for linear ubiquitin. Interacts with NLRP10. Interacts with TANK; this interaction increases in response to DNA damage. Interacts with USP10; this interaction increases in response to DNA damage. Interacts with ZC3H12A; this interaction increases in response to DNA damage. Interacts with IFIT5; the interaction synergizes the recruitment of IKK to MAP3K7 and enhances IKK phosphorylation. Interacts with TRIM29; this interaction induces IKBKG/NEMO ubiquitination and proteolytic degradation. Interacts with TRIM13; this interaction leads to IKBKG/NEMO ubiquitination. Interacts with ARFIP2. Interacts with RIPK1. Interacts with (ubiquitinated) BCL10; interaction with polyubiquitinated BCL10 via both 'Lys-63'-linked and linear ubiquitin is required for TCR-induced NF-kappa-B activation. Interacts with MARCHF2; during the late stages of macrophage viral and bacterial infection; the interaction leads to ubiquitination and degradation of IKBKG/NEMO. In terms of processing, phosphorylation at Ser-68 attenuates aminoterminal homodimerization. Polyubiquitinated on Lys-278 via 'Lys-63'-linked ubiquitin; the ubiquitination is mediated downstream of NOD2 and RIPK2 and probably plays a role in signaling by facilitating interactions with ubiquitin domain-containing proteins and activates the NF-kappa-B pathway. Polyubiquitinated on Lys-278 and Lys-302 through 'Lys-63'-linked ubiquitin; the ubiquitination is mediated by BCL10, MALT1 and TRAF6 and probably plays a role in signaling by facilitating interactions with ubiquitin domain-containing proteins and activates the NF-kappa-B pathway. Monoubiquitinated on Lys-270 and Lys-302; promotes nuclear export. Polyubiquitinated through 'Lys-27' by TRIM23; involved in antiviral innate and inflammatory responses. Linear polyubiquitinated on Lys-111, Lys-143, Lys-226, Lys-246, Lys-270, Lys-278, Lys-285, Lys-295, Lys-302 and Lys-319; the head-to-tail polyubiquitination is mediated by the LUBAC complex and plays a key role in NF-kappa-B activation. Deubiquitinated by USP10 in a TANK-dependent and -independent manner, leading to the negative regulation of NF-kappa-B signaling upon DNA damage. Ubiquitinated at Lys-319 by MARCHF2 following bacterial and viral infection which leads to its degradation. Polyubiquitinated via 'Lys-29'-linked ubiquitin; leading to lysosomal degradation. Post-translationally, sumoylated on Lys-270 and Lys-302 with SUMO1; the modification results in phosphorylation of Ser-85 by ATM leading to a replacement of the sumoylation by mono-ubiquitination on these residues. In terms of processing, neddylated by TRIM40, resulting in stabilization of NFKBIA and down-regulation of NF-kappa-B activity.

The protein localises to the cytoplasm. It is found in the nucleus. Regulatory subunit of the IKK core complex which phosphorylates inhibitors of NF-kappa-B thus leading to the dissociation of the inhibitor/NF-kappa-B complex and ultimately the degradation of the inhibitor. Its binding to scaffolding polyubiquitin plays a key role in IKK activation by multiple signaling receptor pathways. Can recognize and bind both 'Lys-63'-linked and linear polyubiquitin upon cell stimulation, with a much highr affinity for linear polyubiquitin. Could be implicated in NF-kappa-B-mediated protection from cytokine toxicity. Essential for viral activation of IRF3. Involved in TLR3- and IFIH1-mediated antiviral innate response; this function requires 'Lys-27'-linked polyubiquitination. The polypeptide is NF-kappa-B essential modulator (Ikbkg) (Rattus norvegicus (Rat)).